The sequence spans 505 residues: Trans-cinnamate 4-monooxygenase (505 aa).

A helical membrane pass occupies residues 3–23 (LLLLEKTLLGLFLAAVVAIVV). Residues 213–218 (RSRLAQ) and A306 each bind (E)-cinnamate. Residue C447 coordinates heme.

It belongs to the cytochrome P450 family. The cofactor is heme.

It localises to the membrane. It catalyses the reaction (E)-cinnamate + reduced [NADPH--hemoprotein reductase] + O2 = (E)-4-coumarate + oxidized [NADPH--hemoprotein reductase] + H2O + H(+). It functions in the pathway phenylpropanoid metabolism; trans-4-coumarate biosynthesis; trans-4-coumarate from trans-cinnamate: step 1/1. Catalyzes the first oxidative step of the phenylpropanoid pathway in higher plants by transforming trans-cinnamate into p-coumarate. The compounds formed by this pathway are essential components for lignification, pollination, and defense against ultraviolet light, predators and pathogens. The polypeptide is Trans-cinnamate 4-monooxygenase (CYP73A2) (Vigna radiata var. radiata (Mung bean)).